A 686-amino-acid polypeptide reads, in one-letter code: MGTVSSRRLWWPLPLLLLLLLGPAGTRAQEDDDDDYEELVLALRSEEEGLADALQNGATATFHRCAKDPWRLPGTYVVVLKEETHRSQPERTARRLQAQAARRGYLIKLLHVFHDLLPGFLVKMSRDLLELALRLPHVDYIEEDSSVFAQSIPWNLERITPARYQADEYQPPNGGSLVEVYLLDTSIQSGHREIEGRVMVTDFGSVPKEDGTRFHRQASKCDSHGTHLAGVVSGRDAGVAKGASLHSLRVLNCQGKGTVSSTLIGLEFICKSQLVQPVGPLVVLLPLAGGYSRVLNAACQRLARARVVLVAAAGNFRDDACLYSPASAPEVITVGATNAQDQPVTLGTLGTNFGRCVDLFAPGEDIIGASSDCSTCFVSRSGTSQAAAHVAGIAAMMLSAEPELTLAELRQRLIHFSAKDVINEAWFPEDQRVLTPNLVAALPPSTHGEGWQLFCRTVWSAHSGPTRMATAMARCAPDEELLSCSSFSRSGKRRGERIEAQGGRRVCLAHNAFGGEGVYAIARCCLLPQANCSVHTAPPAGAGMGTRAHCHQQGHILTGCSSHWEVEDLGTHKPPVLRPEGQHNQCMGHRGASTHASCCHAPGLECKVKEHGLPAPQEQVTVTCEEGWTLTGCSALPGTSHVLGAYAVDDTCVVRSRDVSTTGSTSEETVAAIAICCRSQHLAQAS.

A signal peptide spans 1 to 28 (MGTVSSRRLWWPLPLLLLLLLGPAGTRA). A propeptide spanning residues 29 to 150 (QEDDDDDYEE…IEEDSSVFAQ (122 aa)) is cleaved from the precursor. At Tyr-36 the chain carries Sulfotyrosine. A Phosphoserine modification is found at Ser-45. Positions 75 to 147 (TYVVVLKEET…VDYIEEDSSV (73 aa)) constitute an Inhibitor I9 domain. The region spanning 153–459 (PWNLERITPA…GWQLFCRTVW (307 aa)) is the Peptidase S8 domain. Active-site charge relay system residues include Asp-184 and His-224. Disulfide bonds link Cys-221–Cys-253 and Cys-321–Cys-356. Catalysis depends on Ser-384, which acts as the Charge relay system. A C-terminal domain region spans residues 448-686 (GEGWQLFCRT…CRSQHLAQAS (239 aa)). 3 disulfide bridges follow: Cys-455–Cys-525, Cys-475–Cys-524, and Cys-484–Cys-507. Asn-531 carries an N-linked (GlcNAc...) asparagine glycan. 6 disulfide bridges follow: Cys-532–Cys-599, Cys-550–Cys-598, Cys-560–Cys-586, Cys-606–Cys-677, Cys-624–Cys-676, and Cys-633–Cys-652. Ser-686 bears the Phosphoserine mark.

It belongs to the peptidase S8 family. In terms of assembly, monomer. Can self-associate to form dimers and higher multimers which may have increased LDLR degrading activity. The precursor protein but not the mature protein may form multimers. Interacts with APOB, VLDLR, LRP8/APOER2 and BACE1. The full-length immature form (pro-PCSK9) interacts with SCNN1A, SCNN1B and SCNN1G. The pro-PCSK9 form (via C-terminal domain) interacts with LDLR. Interacts (via the C-terminal domain) with ANXA2 (via repeat Annexin 1); the interaction inhibits the degradation of LDLR. It depends on Ca(2+) as a cofactor. Cleavage by furin and PCSK5 generates a truncated inactive protein that is unable to induce LDLR degradation. Post-translationally, undergoes autocatalytic cleavage in the endoplasmic reticulum to release the propeptide from the N-terminus and the cleavage of the propeptide is strictly required for its maturation and activation. The cleaved propeptide however remains associated with the catalytic domain through non-covalent interactions, preventing potential substrates from accessing its active site. As a result, it is secreted from cells as a propeptide-containing, enzymatically inactive protein. In terms of processing, phosphorylation protects the propeptide against proteolysis.

The protein localises to the cytoplasm. It localises to the secreted. It is found in the endosome. The protein resides in the lysosome. Its subcellular location is the cell surface. The protein localises to the endoplasmic reticulum. It localises to the golgi apparatus. With respect to regulation, its proteolytic activity is autoinhibited by the non-covalent binding of the propeptide to the catalytic domain. Inhibited by EGTA. Crucial player in the regulation of plasma cholesterol homeostasis. Binds to low-density lipid receptor family members: low density lipoprotein receptor (LDLR), very low density lipoprotein receptor (VLDLR), apolipoprotein E receptor (LRP1/APOER) and apolipoprotein receptor 2 (LRP8/APOER2), and promotes their degradation in intracellular acidic compartments. Acts via a non-proteolytic mechanism to enhance the degradation of the hepatic LDLR through a clathrin LDLRAP1/ARH-mediated pathway. May prevent the recycling of LDLR from endosomes to the cell surface or direct it to lysosomes for degradation. Can induce ubiquitination of LDLR leading to its subsequent degradation. Inhibits intracellular degradation of APOB via the autophagosome/lysosome pathway in a LDLR-independent manner. Involved in the disposal of non-acetylated intermediates of BACE1 in the early secretory pathway. Inhibits epithelial Na(+) channel (ENaC)-mediated Na(+) absorption by reducing ENaC surface expression primarily by increasing its proteasomal degradation. Regulates neuronal apoptosis via modulation of LRP8/APOER2 levels and related anti-apoptotic signaling pathways. This Saguinus labiatus (Red-chested mustached tamarin) protein is Proprotein convertase subtilisin/kexin type 9 (PCSK9).